The following is an 88-amino-acid chain: UPF0297 protein LAR_0520 (88 aa).

Belongs to the UPF0297 family.

In Limosilactobacillus reuteri subsp. reuteri (strain JCM 1112) (Lactobacillus reuteri), this protein is UPF0297 protein LAR_0520.